A 177-amino-acid polypeptide reads, in one-letter code: Early nodulin-like protein 6 (177 aa).

The N-terminal stretch at 1-23 (MGGQKIVLLSIFVCFYVFSLVSC) is a signal peptide. The Phytocyanin domain occupies 24-127 (TEFEAGGENG…GQKMIIKVME (104 aa)). Residue Asn-41 is glycosylated (N-linked (GlcNAc...) asparagine). An intrachain disulfide couples Cys-81 to Cys-115. Residue Asn-149 is the site of GPI-anchor amidated asparagine attachment. Positions 150–177 (HAVRKTSRFLGAGLVTISILVITVFSLV) are cleaved as a propeptide — removed in mature form.

Belongs to the early nodulin-like (ENODL) family. In terms of tissue distribution, confined to flowers.

The protein resides in the cell membrane. Functionally, may act as a carbohydrate transporter. The sequence is that of Early nodulin-like protein 6 from Arabidopsis thaliana (Mouse-ear cress).